A 247-amino-acid chain; its full sequence is Carboxy-S-adenosyl-L-methionine synthase (247 aa).

Residues tyrosine 39, 64-66 (GCS), 89-90 (DN), 117-118 (DI), asparagine 132, and arginine 199 contribute to the S-adenosyl-L-methionine site.

The protein belongs to the class I-like SAM-binding methyltransferase superfamily. Cx-SAM synthase family. As to quaternary structure, homodimer.

The catalysed reaction is prephenate + S-adenosyl-L-methionine = carboxy-S-adenosyl-L-methionine + 3-phenylpyruvate + H2O. In terms of biological role, catalyzes the conversion of S-adenosyl-L-methionine (SAM) to carboxy-S-adenosyl-L-methionine (Cx-SAM). This chain is Carboxy-S-adenosyl-L-methionine synthase, found in Citrobacter koseri (strain ATCC BAA-895 / CDC 4225-83 / SGSC4696).